The following is a 125-amino-acid chain: Large ribosomal subunit protein bL12 (125 aa).

The protein belongs to the bacterial ribosomal protein bL12 family. Homodimer. Part of the ribosomal stalk of the 50S ribosomal subunit. Forms a multimeric L10(L12)X complex, where L10 forms an elongated spine to which 2 to 4 L12 dimers bind in a sequential fashion. Binds GTP-bound translation factors.

In terms of biological role, forms part of the ribosomal stalk which helps the ribosome interact with GTP-bound translation factors. Is thus essential for accurate translation. The polypeptide is Large ribosomal subunit protein bL12 (Anaeromyxobacter sp. (strain Fw109-5)).